We begin with the raw amino-acid sequence, 204 residues long: Protein FAM167A (204 aa).

Residues 58-80 form a disordered region; the sequence is GLAVSDGSTELEKDAGLKPRATP. Residues 113-146 adopt a coiled-coil conformation; it reads LRKELMEMRIQDQQLARQLMRLRGDINKLKVEQT.

Belongs to the FAM167 (SEC) family.

This chain is Protein FAM167A (fam167a), found in Danio rerio (Zebrafish).